We begin with the raw amino-acid sequence, 293 residues long: 4-hydroxy-tetrahydrodipicolinate synthase (293 aa).

T47 provides a ligand contact to pyruvate. Catalysis depends on Y135, which acts as the Proton donor/acceptor. K164 serves as the catalytic Schiff-base intermediate with substrate. I206 lines the pyruvate pocket.

The protein belongs to the DapA family. As to quaternary structure, homotetramer; dimer of dimers.

It localises to the cytoplasm. It catalyses the reaction L-aspartate 4-semialdehyde + pyruvate = (2S,4S)-4-hydroxy-2,3,4,5-tetrahydrodipicolinate + H2O + H(+). It participates in amino-acid biosynthesis; L-lysine biosynthesis via DAP pathway; (S)-tetrahydrodipicolinate from L-aspartate: step 3/4. Functionally, catalyzes the condensation of (S)-aspartate-beta-semialdehyde [(S)-ASA] and pyruvate to 4-hydroxy-tetrahydrodipicolinate (HTPA). The chain is 4-hydroxy-tetrahydrodipicolinate synthase from Flavobacterium psychrophilum (strain ATCC 49511 / DSM 21280 / CIP 103535 / JIP02/86).